Consider the following 105-residue polypeptide: Thioredoxin (105 aa).

A Thioredoxin domain is found at 1–105 (VQVISSYDQF…LQAAITQHSA (105 aa)). Catalysis depends on nucleophile residues C29 and C32. C29 and C32 form a disulfide bridge.

This sequence belongs to the thioredoxin family. In terms of assembly, monomer.

In terms of biological role, participates in various redox reactions through the reversible oxidation of its active center dithiol to a disulfide and catalyzes dithiol-disulfide exchange reactions. In Malassezia sympodialis (Atopic eczema-associated yeast), this protein is Thioredoxin.